Here is a 609-residue protein sequence, read N- to C-terminus: Meiotically up-regulated gene 28 protein (609 aa).

RRM domains follow at residues I20–I103 and C419–K499.

Its subcellular location is the cytoplasm. Functionally, has a role in sporulation. This Schizosaccharomyces pombe (strain 972 / ATCC 24843) (Fission yeast) protein is Meiotically up-regulated gene 28 protein (mug28).